We begin with the raw amino-acid sequence, 210 residues long: Imidazoleglycerol-phosphate dehydratase (210 aa).

Belongs to the imidazoleglycerol-phosphate dehydratase family.

The protein localises to the cytoplasm. It catalyses the reaction D-erythro-1-(imidazol-4-yl)glycerol 3-phosphate = 3-(imidazol-4-yl)-2-oxopropyl phosphate + H2O. It participates in amino-acid biosynthesis; L-histidine biosynthesis; L-histidine from 5-phospho-alpha-D-ribose 1-diphosphate: step 6/9. The polypeptide is Imidazoleglycerol-phosphate dehydratase (Mycobacterium marinum (strain ATCC BAA-535 / M)).